We begin with the raw amino-acid sequence, 470 residues long: Methylenetetrahydrofolate--tRNA-(uracil-5-)-methyltransferase TrmFO (470 aa).

Residue 10–15 (GAGLAG) participates in FAD binding.

Belongs to the MnmG family. TrmFO subfamily. FAD serves as cofactor.

The protein localises to the cytoplasm. The enzyme catalyses uridine(54) in tRNA + (6R)-5,10-methylene-5,6,7,8-tetrahydrofolate + NADH + H(+) = 5-methyluridine(54) in tRNA + (6S)-5,6,7,8-tetrahydrofolate + NAD(+). It carries out the reaction uridine(54) in tRNA + (6R)-5,10-methylene-5,6,7,8-tetrahydrofolate + NADPH + H(+) = 5-methyluridine(54) in tRNA + (6S)-5,6,7,8-tetrahydrofolate + NADP(+). Catalyzes the folate-dependent formation of 5-methyl-uridine at position 54 (M-5-U54) in all tRNAs. The protein is Methylenetetrahydrofolate--tRNA-(uracil-5-)-methyltransferase TrmFO of Prochlorococcus marinus (strain MIT 9215).